The sequence spans 148 residues: Large ribosomal subunit protein bL19 (148 aa).

The protein belongs to the bacterial ribosomal protein bL19 family.

Its function is as follows. This protein is located at the 30S-50S ribosomal subunit interface and may play a role in the structure and function of the aminoacyl-tRNA binding site. This is Large ribosomal subunit protein bL19 from Paramagnetospirillum magneticum (strain ATCC 700264 / AMB-1) (Magnetospirillum magneticum).